The following is a 658-amino-acid chain: Sodium/nucleoside cotransporter 1 (658 aa).

Over M1–S75 the chain is Cytoplasmic. A helical membrane pass occupies residues L76–L99. The Extracellular portion of the chain corresponds to D100–A104. Residues L105–L123 form a helical membrane-spanning segment. Topologically, residues K124 to Q142 are cytoplasmic. The chain crosses the membrane as a helical span at residues L143–W162. Topologically, residues L163–Q173 are extracellular. The chain crosses the membrane as a helical span at residues L174 to C190. Residues S191–A196 are Cytoplasmic-facing. Residues V197–I217 traverse the membrane as a helical segment. Topologically, residues R218 to V256 are extracellular. Residues F257–L278 form a helical membrane-spanning segment. At G279–A289 the chain is on the cytoplasmic side. A helical membrane pass occupies residues W290–G313. At M314 to E332 the chain is on the extracellular side. Residues I333–F355 form a helical membrane-spanning segment. At G356 to S361 the chain is on the cytoplasmic side. A helical membrane pass occupies residues L362–Y381. Residues P382 to A418 are Extracellular-facing. Residues L419 to L441 form a helical membrane-spanning segment. Residues S442–G452 are Cytoplasmic-facing. Residues L453 to W474 form a helical membrane-spanning segment. At T475–T529 the chain is on the extracellular side. The chain crosses the membrane as a helical span at residues T530 to V553. Residues P554–V564 lie on the Cytoplasmic side of the membrane. A helical transmembrane segment spans residues I565–V587. The Extracellular segment spans residues P588–A658. The N-linked (GlcNAc...) asparagine glycan is linked to N653.

It belongs to the concentrative nucleoside transporter (CNT) (TC 2.A.41) family. In terms of processing, N-glycosylated. N-glycosylation is required for localization to the plasma membrane and the transporter activity.

The protein localises to the cell membrane. The protein resides in the apical cell membrane. The enzyme catalyses uridine(out) + Na(+)(out) = uridine(in) + Na(+)(in). The catalysed reaction is thymidine(out) + Na(+)(out) = thymidine(in) + Na(+)(in). It carries out the reaction cytidine(out) + Na(+)(out) = cytidine(in) + Na(+)(in). It catalyses the reaction adenosine(out) + Na(+)(out) = adenosine(in) + Na(+)(in). With respect to regulation, due to its high apparent affinity but slow transport, adenosine could act as a negative regulator of pyrimidine transport under some conditions. In terms of biological role, sodium and pyrimidine nucleoside symporter of the plasma membrane that imports uridine, thymidine and cytidine into cells by coupling their transport to the transmembrane sodium electrochemical gradient. Also transports adenosine, an atypical substrate transported with high apparent affinity, but low maximum velocity. Therefore, exhibits the transport characteristics of the nucleoside transport system cit or N2 subtype (N2/cit). Involved in renal nucleoside (re)absorption. The polypeptide is Sodium/nucleoside cotransporter 1 (SLC28A1) (Oryctolagus cuniculus (Rabbit)).